Reading from the N-terminus, the 209-residue chain is Cytidylate kinase (209 aa).

An ATP-binding site is contributed by 7-15; that stretch reads GVAASGKSS.

This sequence belongs to the cytidylate kinase family. Type 1 subfamily.

The protein resides in the cytoplasm. The catalysed reaction is CMP + ATP = CDP + ADP. It catalyses the reaction dCMP + ATP = dCDP + ADP. The polypeptide is Cytidylate kinase (Deinococcus geothermalis (strain DSM 11300 / CIP 105573 / AG-3a)).